The sequence spans 731 residues: Polyribonucleotide nucleotidyltransferase (731 aa).

Asp-488 and Asp-494 together coordinate Mg(2+). Positions 555–614 (PRIEVINIAVDKIRDVIGSGGKVIREIVEQTGAKINIEDDGTIKIASADAKTIEAAKRWI) constitute a KH domain. An S1 motif domain is found at 624–692 (GAIYQGTVVK…ERGKVRLSMK (69 aa)). Residues 693 to 731 (AVDQKTGKEMTDDKSVKEEKCMDEKKQPENKRRRKKKEE) are disordered. The span at 694-722 (VDQKTGKEMTDDKSVKEEKCMDEKKQPEN) shows a compositional bias: basic and acidic residues.

The protein belongs to the polyribonucleotide nucleotidyltransferase family. It depends on Mg(2+) as a cofactor.

It localises to the cytoplasm. The enzyme catalyses RNA(n+1) + phosphate = RNA(n) + a ribonucleoside 5'-diphosphate. Its function is as follows. Involved in mRNA degradation. Catalyzes the phosphorolysis of single-stranded polyribonucleotides processively in the 3'- to 5'-direction. This chain is Polyribonucleotide nucleotidyltransferase, found in Bartonella tribocorum (strain CIP 105476 / IBS 506).